Consider the following 139-residue polypeptide: Large ribosomal subunit protein uL16 (139 aa).

The segment at 1–21 (MLMPKRVQYRKTQRGRMKGNA) is disordered. Over residues 7–17 (VQYRKTQRGRM) the composition is skewed to basic residues.

Belongs to the universal ribosomal protein uL16 family. As to quaternary structure, part of the 50S ribosomal subunit.

In terms of biological role, binds 23S rRNA and is also seen to make contacts with the A and possibly P site tRNAs. The protein is Large ribosomal subunit protein uL16 of Chlorobaculum tepidum (strain ATCC 49652 / DSM 12025 / NBRC 103806 / TLS) (Chlorobium tepidum).